A 544-amino-acid polypeptide reads, in one-letter code: Dihydrolipoyllysine-residue acetyltransferase component of pyruvate dehydrogenase complex (544 aa).

Lipoyl-binding domains are found at residues 1 to 76 and 113 to 188; these read MYEF…VTID and IYDF…VLIG. N6-lipoyllysine occurs at positions 42 and 154. In terms of domain architecture, Peripheral subunit-binding (PSBD) spans 242–279; that stretch reads LASPVARKLASDLGVDIATIKGSGEQGRVMKDDVQNSK. His-516 is an active-site residue.

This sequence belongs to the 2-oxoacid dehydrogenase family. In terms of assembly, forms a 24-polypeptide structural core with octahedral symmetry. It depends on (R)-lipoate as a cofactor.

It catalyses the reaction N(6)-[(R)-dihydrolipoyl]-L-lysyl-[protein] + acetyl-CoA = N(6)-[(R)-S(8)-acetyldihydrolipoyl]-L-lysyl-[protein] + CoA. Functionally, the pyruvate dehydrogenase complex catalyzes the overall conversion of pyruvate to acetyl-CoA and CO(2). It contains multiple copies of three enzymatic components: pyruvate dehydrogenase (E1), dihydrolipoamide acetyltransferase (E2) and lipoamide dehydrogenase (E3). The sequence is that of Dihydrolipoyllysine-residue acetyltransferase component of pyruvate dehydrogenase complex (pdhC) from Acholeplasma laidlawii.